Here is a 907-residue protein sequence, read N- to C-terminus: Clathrin coat assembly protein AP180 (907 aa).

The ENTH domain occupies 14-145 (QYSVTGSAVA…FSYRQMAFDF (132 aa)). 4 disordered regions span residues 285-326 (LEGK…DTSP), 342-380 (TSKP…TAWG), 393-414 (SVPS…PTTT), and 505-525 (VPVV…APSP). A phosphoserine mark is found at serine 296, serine 300, and serine 306. Positions 302 to 324 (LSKSSPATTVTSPNSTPAKTIDT) are enriched in polar residues. Threonine 310 is a glycosylation site (O-linked (GlcNAc) threonine). Serine 313 bears the Phosphoserine mark. Threonine 317 is subject to Phosphothreonine. The segment covering 505-515 (VPVVTPTASTA) has biased composition (low complexity). A compositionally biased stretch (pro residues) spans 516–525 (PPVPATAPSP). Serine 596, serine 602, serine 623, serine 629, and serine 763 each carry phosphoserine. An Asymmetric dimethylarginine; alternate modification is found at arginine 865. An Omega-N-methylarginine; alternate modification is found at arginine 865. The segment at 867–907 (PFGAAAVPGTQLSPSPTPASQSPKKPPAKDPLADLNIKDFL) is disordered. Over residues 893-907 (PAKDPLADLNIKDFL) the composition is skewed to basic and acidic residues.

The protein belongs to the PICALM/SNAP91 family. Binds AP2A2. Interacts with AP2B1; clathrin competes with SNAP91. In terms of processing, thr-310 can be modified by the addition of N-acetylglucosamine which can be further phosphorylated. There is no evidence for direct Thr-310 phosphorylation.

It is found in the cell membrane. The protein localises to the membrane. It localises to the coated pit. Functionally, adaptins are components of the adapter complexes which link clathrin to receptors in coated vesicles. Clathrin-associated protein complexes are believed to interact with the cytoplasmic tails of membrane proteins, leading to their selection and concentration. Binding of AP180 to clathrin triskelia induces their assembly into 60-70 nm coats. The protein is Clathrin coat assembly protein AP180 (SNAP91) of Homo sapiens (Human).